A 145-amino-acid polypeptide reads, in one-letter code: Antimicrobial peptide NK-lysin (145 aa).

A signal peptide spans 1 to 22; that stretch reads MTSRALLLLASALLGTPGLTFS. Residues 23 to 62 constitute a propeptide that is removed on maturation; the sequence is GLNPESYDLATAHLSDGEQFCQGLTQEDLQGDLLTERERQ. Residues 62-142 enclose the Saposin B-type domain; that stretch reads QGIACWSCRK…VDIKLCKHKA (81 aa). 3 disulfide bridges follow: cysteine 66-cysteine 138, cysteine 69-cysteine 132, and cysteine 97-cysteine 107. A propeptide spanning residues 141–145 is cleaved from the precursor; that stretch reads KAGLI.

Its subcellular location is the secreted. Its function is as follows. May be an effector molecule of cytotoxic activity. Has antimicrobial activity. This Equus caballus (Horse) protein is Antimicrobial peptide NK-lysin (NKL).